The chain runs to 608 residues: uncharacterized protein (608 aa).

A disordered region spans residues 1–21 (MHTNSPLRADNQDLETQPLLR). The residue at position 24 (Thr-24) is a Phosphothreonine. The residue at position 27 (Ser-27) is a Phosphoserine. Residues 55–75 (IIYLLGIVLLSFFGVSIVQYI) form a helical membrane-spanning segment. N-linked (GlcNAc...) asparagine glycans are attached at residues Asn-115, Asn-141, Asn-169, Asn-407, Asn-425, Asn-449, Asn-453, Asn-527, and Asn-580.

The protein localises to the membrane. This is an uncharacterized protein from Saccharomyces cerevisiae (strain ATCC 204508 / S288c) (Baker's yeast).